The chain runs to 81 residues: Protein Vpu (81 aa).

Topologically, residues 1–7 are extracellular; it reads MQPSQII. A helical transmembrane segment spans residues 8 to 28; that stretch reads AIAALVVAAIIAIVVWTIVFI. The Cytoplasmic segment spans residues 29-81; it reads EYRRIKRQRKIDCIIDRIRERAEDSGNESEGDREELSKLVEMGHHAPWDIDDL. Phosphoserine; by host CK2 occurs at positions 53 and 57.

This sequence belongs to the HIV-1 VPU protein family. Homopentamer. Interacts with host CD4 and BRTC; these interactions induce proteasomal degradation of CD4. Interacts with host BST2; this interaction leads to the degradation of host BST2. Interacts with host FBXW11. Interacts with host AP1M1; this interaction plays a role in the mistrafficking and subsequent degradation of host BST2. Interacts with host RANBP2; this interaction allows Vpu to down-regulate host BLM sumoylation. In terms of processing, phosphorylated by host CK2. This phosphorylation is necessary for interaction with human BTRC and degradation of CD4.

Its subcellular location is the host membrane. Ion channel activity is inhibited by hexamethylene amiloride in vitro. In terms of biological role, enhances virion budding by targeting host CD4 and Tetherin/BST2 to proteasome degradation. Degradation of CD4 prevents any unwanted premature interactions between viral Env and its host receptor CD4 in the endoplasmic reticulum. Degradation of antiretroviral protein Tetherin/BST2 is important for virion budding, as BST2 tethers new viral particles to the host cell membrane. Mechanistically, Vpu bridges either CD4 or BST2 to BTRC, a substrate recognition subunit of the Skp1/Cullin/F-box protein E3 ubiquitin ligase, induces their ubiquitination and subsequent proteasomal degradation. The alteration of the E3 ligase specificity by Vpu seems to promote the degradation of host IKBKB, leading to NF-kappa-B down-regulation and subsequent apoptosis. Acts as a viroporin that forms an oligomeric ion channel in membranes. Modulates the host DNA repair mechanisms to promote degradation of nuclear viral cDNA in cells that are already productively infected in order to suppress immune sensing and proviral hyper-integration (superinfection). Manipulates PML-NBs and modulates SUMOylation of host BLM protein thereby enhancing its DNA-end processing activity toward viral unintegrated linear DNA. Also inhibits RAD52-mediated homologous repair of viral cDNA, preventing the generation of dead-end circular forms of single copies of the long terminal repeat and permitting sustained nucleolytic attack. In Homo sapiens (Human), this protein is Protein Vpu.